A 301-amino-acid polypeptide reads, in one-letter code: Bifunctional protein FolD (301 aa).

NADP(+)-binding positions include 169–171 (GRS), S194, and I235.

This sequence belongs to the tetrahydrofolate dehydrogenase/cyclohydrolase family. As to quaternary structure, homodimer.

The enzyme catalyses (6R)-5,10-methylene-5,6,7,8-tetrahydrofolate + NADP(+) = (6R)-5,10-methenyltetrahydrofolate + NADPH. It catalyses the reaction (6R)-5,10-methenyltetrahydrofolate + H2O = (6R)-10-formyltetrahydrofolate + H(+). The protein operates within one-carbon metabolism; tetrahydrofolate interconversion. Catalyzes the oxidation of 5,10-methylenetetrahydrofolate to 5,10-methenyltetrahydrofolate and then the hydrolysis of 5,10-methenyltetrahydrofolate to 10-formyltetrahydrofolate. This Gloeothece citriformis (strain PCC 7424) (Cyanothece sp. (strain PCC 7424)) protein is Bifunctional protein FolD.